The following is a 143-amino-acid chain: Transcriptional regulator MraZ (143 aa).

2 SpoVT-AbrB domains span residues 5–47 (EYHH…SMEE) and 76–119 (AMES…AKER).

This sequence belongs to the MraZ family. Forms oligomers.

The protein localises to the cytoplasm. It is found in the nucleoid. In Lactobacillus helveticus (strain DPC 4571), this protein is Transcriptional regulator MraZ.